A 174-amino-acid chain; its full sequence is MIGEHPYVKWAIRVIENYVRYGKVIEPDESVPEELFKRRAGAFVTLHKTDGSLRGCIGTYLPTKPNLALEIRDNAIAAATQDPRFPPVSPDELDDIVVHVDILSPPEPVRDISELDPKKYGVIVVKGWRRGLLLPDIEGVDTVEEQLRIAKLKAGIPEWDDDVEIYRFTVERYK.

An AMMECR1 domain is found at 2 to 174 (IGEHPYVKWA…IYRFTVERYK (173 aa)).

The polypeptide is Protein TM_1551 (Thermotoga maritima (strain ATCC 43589 / DSM 3109 / JCM 10099 / NBRC 100826 / MSB8)).